The following is a 348-amino-acid chain: Phosphatidylinositol 3,4,5-trisphosphate 3-phosphatase ptn1 (348 aa).

Residues 18–189 (EKVNRSFAYL…YYIEILKQFP (172 aa)) form the Phosphatase tensin-type domain. Catalysis depends on C129, which acts as the Phosphocysteine intermediate.

Its subcellular location is the cytoplasmic vesicle. The catalysed reaction is a 1,2-diacyl-sn-glycero-3-phospho-(1D-myo-inositol-3,4,5-trisphosphate) + H2O = a 1,2-diacyl-sn-glycero-3-phospho-(1D-myo-inositol-4,5-bisphosphate) + phosphate. The enzyme catalyses 1,2-dioctanoyl-sn-glycero-3-phospho-(1D-myo-inositol-3,4,5-trisphosphate) + H2O = 1,2-dioctanoyl-sn-glycero-3-phospho-(1D-myo-inositol-4,5-bisphosphate) + phosphate. It carries out the reaction 1,2-dihexadecanoyl-sn-glycero-3-phospho-(1D-myo-inositol-3,4,5-trisphosphate) + H2O = 1,2-dihexadecanoyl-sn-glycero-3-phospho-(1D-myo-inositol-4,5-bisphosphate) + phosphate. Acts as a phosphoinositide 3-phosphatase and regulates PtdIns(3,4,5)P3 levels. The sequence is that of Phosphatidylinositol 3,4,5-trisphosphate 3-phosphatase ptn1 (ptn1) from Schizosaccharomyces pombe (strain 972 / ATCC 24843) (Fission yeast).